The chain runs to 130 residues: Ribosome-binding factor A (130 aa).

The protein belongs to the RbfA family. As to quaternary structure, monomer. Binds 30S ribosomal subunits, but not 50S ribosomal subunits or 70S ribosomes.

The protein localises to the cytoplasm. One of several proteins that assist in the late maturation steps of the functional core of the 30S ribosomal subunit. Associates with free 30S ribosomal subunits (but not with 30S subunits that are part of 70S ribosomes or polysomes). Required for efficient processing of 16S rRNA. May interact with the 5'-terminal helix region of 16S rRNA. This Flavobacterium psychrophilum (strain ATCC 49511 / DSM 21280 / CIP 103535 / JIP02/86) protein is Ribosome-binding factor A.